Here is a 488-residue protein sequence, read N- to C-terminus: Ribulose bisphosphate carboxylase large chain (488 aa).

The substrate site is built by N127 and T177. The active-site Proton acceptor is K179. Position 181 (K181) interacts with substrate. The Mg(2+) site is built by K205, D207, and E208. At K205 the chain carries N6-carboxylysine. H297 serves as the catalytic Proton acceptor. The substrate site is built by R298, H330, and S382.

It belongs to the RuBisCO large chain family. Type I subfamily. In terms of assembly, heterohexadecamer of 8 large chains and 8 small chains. Mg(2+) serves as cofactor.

It is found in the plastid. Its subcellular location is the chloroplast. The catalysed reaction is 2 (2R)-3-phosphoglycerate + 2 H(+) = D-ribulose 1,5-bisphosphate + CO2 + H2O. The enzyme catalyses D-ribulose 1,5-bisphosphate + O2 = 2-phosphoglycolate + (2R)-3-phosphoglycerate + 2 H(+). Functionally, ruBisCO catalyzes two reactions: the carboxylation of D-ribulose 1,5-bisphosphate, the primary event in carbon dioxide fixation, as well as the oxidative fragmentation of the pentose substrate in the photorespiration process. Both reactions occur simultaneously and in competition at the same active site. This Cyanidium caldarium (Red alga) protein is Ribulose bisphosphate carboxylase large chain.